A 119-amino-acid chain; its full sequence is Acidic phospholipase A2 CM-II (119 aa).

Y25, G27, and G29 together coordinate Ca(2+). H45 is an active-site residue. D46 is a Ca(2+) binding site. Residue D87 is part of the active site.

This sequence belongs to the phospholipase A2 family. Group II subfamily. D49 sub-subfamily. It depends on Ca(2+) as a cofactor. Contains 6 disulfide bonds. In terms of tissue distribution, expressed by the venom gland.

Its subcellular location is the secreted. It catalyses the reaction a 1,2-diacyl-sn-glycero-3-phosphocholine + H2O = a 1-acyl-sn-glycero-3-phosphocholine + a fatty acid + H(+). Its function is as follows. PLA2 catalyzes the calcium-dependent hydrolysis of the 2-acyl groups in 3-sn-phosphoglycerides. The chain is Acidic phospholipase A2 CM-II from Bitis nasicornis (Rhinoceros adder).